A 158-amino-acid polypeptide reads, in one-letter code: Endoribonuclease YbeY (158 aa).

Histidine 119, histidine 123, and histidine 129 together coordinate Zn(2+).

It belongs to the endoribonuclease YbeY family. It depends on Zn(2+) as a cofactor.

It is found in the cytoplasm. Its function is as follows. Single strand-specific metallo-endoribonuclease involved in late-stage 70S ribosome quality control and in maturation of the 3' terminus of the 16S rRNA. The sequence is that of Endoribonuclease YbeY from Shewanella woodyi (strain ATCC 51908 / MS32).